A 306-amino-acid polypeptide reads, in one-letter code: Lipid A biosynthesis lauroyltransferase (306 aa).

Residues 17–37 (WLTWLGIGVLWLVVQLPYPVI) traverse the membrane as a helical segment. The HXXXXD motif motif lies at 132–137 (HFLTLE).

This sequence belongs to the LpxL/LpxM/LpxP family. As to quaternary structure, monomer.

It localises to the cell inner membrane. The catalysed reaction is dodecanoyl-[ACP] + alpha-Kdo-(2-&gt;4)-alpha-Kdo-(2-&gt;6)-lipid IVA (E. coli) = alpha-Kdo-(2-&gt;4)-alpha-Kdo-(2-&gt;6)-(dodecanoyl)-lipid IVA (E. coli) + holo-[ACP]. It participates in glycolipid biosynthesis; KDO(2)-lipid A biosynthesis; KDO(2)-lipid A from CMP-3-deoxy-D-manno-octulosonate and lipid IV(A): step 3/4. It functions in the pathway bacterial outer membrane biogenesis; lipopolysaccharide biosynthesis. Its function is as follows. Catalyzes the transfer of laurate from lauroyl-[acyl-carrier-protein] (ACP) to Kdo(2)-lipid IV(A) to form Kdo(2)-(lauroyl)-lipid IV(A). Has 10 fold selectivity for lauroyl-ACP over myristoyl-ACP. In vitro, can also catalyze a slow second acylation reaction leading to the formation of Kdo(2)-(dilauroyl)-lipid IV(A). The sequence is that of Lipid A biosynthesis lauroyltransferase from Escherichia coli (strain K12).